A 213-amino-acid chain; its full sequence is Probable transaldolase (213 aa).

Residue lysine 83 is the Schiff-base intermediate with substrate of the active site.

It belongs to the transaldolase family. Type 3B subfamily.

The protein localises to the cytoplasm. It catalyses the reaction D-sedoheptulose 7-phosphate + D-glyceraldehyde 3-phosphate = D-erythrose 4-phosphate + beta-D-fructose 6-phosphate. Its pathway is carbohydrate degradation; pentose phosphate pathway; D-glyceraldehyde 3-phosphate and beta-D-fructose 6-phosphate from D-ribose 5-phosphate and D-xylulose 5-phosphate (non-oxidative stage): step 2/3. Transaldolase is important for the balance of metabolites in the pentose-phosphate pathway. This is Probable transaldolase from Desulfitobacterium hafniense (strain DSM 10664 / DCB-2).